Reading from the N-terminus, the 767-residue chain is Receptor-type tyrosine-protein phosphatase-like ida-1 (767 aa).

The signal sequence occupies residues 1-19; that stretch reads MRFFHSIIVLLFSISTGSA. Residues 20–398 lie on the Lumenal side of the membrane; sequence FLLYGCNLSE…SLPVESSERD (379 aa). N-linked (GlcNAc...) asparagine glycosylation is found at N26 and N146. Residues 399 to 419 traverse the membrane as a helical segment; that stretch reads WLLMPVLFVCAFTVTALGLVA. Residues 420-767 lie on the Cytoplasmic side of the membrane; it reads AVQIARSRRH…NHLLKSIATK (348 aa). A Tyrosine-protein phosphatase domain is found at 527-756; that stretch reads SQNRTILPFD…KLVYGCVAQE (230 aa).

It belongs to the protein-tyrosine phosphatase family. Receptor class 8 subfamily. In terms of processing, proteolytically cleaved probably at a dibasic consensus sequence by egl-3. As to expression, in hermaphrodites specifically expressed in neurons and in particular in the head nerve ring (ADE, ALA, ASI, ASK, AUA, ASG, AVH and AVJ neurons), in the ventral nerve cord, pre-anal ganglia (PVP neuron), in the tail (PHA, PHB and PHC neurons) and in vulval motor neurons VC and HSN and the vulval uv1 cells. In males, also expressed in neurons anterior to the nerve ring and male-specific neurons in the tail.

Its subcellular location is the cytoplasmic vesicle membrane. The protein resides in the perikaryon. The protein localises to the cell projection. It is found in the axon. It localises to the dendrite. Functionally, regulates dense-core vesicle (DCV) trafficking and/or secretion. Probably by controlling DCV trafficking, plays a role in the AVG neuron-mediated formation of the right axon tract of the ventral nerve cord. Involved in locomotion by regulating acetylcholine release. Probably by controlling the secretion of FLP neuropeptides, regulates the turning step of male mating behavior. Plays a role in preventing dauer formation. This Caenorhabditis elegans protein is Receptor-type tyrosine-protein phosphatase-like ida-1.